We begin with the raw amino-acid sequence, 785 residues long: ATP-dependent 6-phosphofructokinase 1 (785 aa).

The N-terminal catalytic PFK domain 1 stretch occupies residues methionine 1–threonine 389. ATP is bound by residues glycine 23, arginine 86 to serine 87, and glycine 116 to serine 119. Aspartate 117 serves as a coordination point for Mg(2+). Residues serine 162–aspartate 164, arginine 199, methionine 206–arginine 208, glutamate 263, arginine 291, and histidine 297–arginine 300 contribute to the substrate site. Catalysis depends on aspartate 164, which acts as the Proton acceptor. The interval proline 390–methionine 403 is interdomain linker. The interval arginine 404 to cysteine 785 is C-terminal regulatory PFK domain 2. Residues arginine 480, threonine 537–asparagine 541, arginine 575, glutamine 582–glycine 584, glutamate 642, arginine 668, histidine 674–glutamine 677, and arginine 749 each bind beta-D-fructose 2,6-bisphosphate.

It belongs to the phosphofructokinase type A (PFKA) family. ATP-dependent PFK group I subfamily. Eukaryotic two domain clade 'E' sub-subfamily. In terms of assembly, homotetramer. Requires Mg(2+) as cofactor.

It is found in the cytoplasm. The enzyme catalyses beta-D-fructose 6-phosphate + ATP = beta-D-fructose 1,6-bisphosphate + ADP + H(+). It participates in carbohydrate degradation; glycolysis; D-glyceraldehyde 3-phosphate and glycerone phosphate from D-glucose: step 3/4. Its activity is regulated as follows. Allosterically activated by ADP, AMP, or fructose 2,6-bisphosphate, and allosterically inhibited by ATP or citrate. Functionally, catalyzes the phosphorylation of D-fructose 6-phosphate to fructose 1,6-bisphosphate by ATP, the first committing step of glycolysis. The protein is ATP-dependent 6-phosphofructokinase 1 (pfkA) of Aspergillus oryzae (strain ATCC 42149 / RIB 40) (Yellow koji mold).